A 146-amino-acid polypeptide reads, in one-letter code: Ankyrin repeat-containing protein P16F5.05c (146 aa).

4 ANK repeats span residues 1–31 (MDVD…ELSR), 35–64 (NGNS…KEVI), 70–99 (SGNT…DPHI), and 103–132 (YEKS…AKGS).

It is found in the cytoplasm. The protein localises to the nucleus. The chain is Ankyrin repeat-containing protein P16F5.05c from Schizosaccharomyces pombe (strain 972 / ATCC 24843) (Fission yeast).